Here is a 587-residue protein sequence, read N- to C-terminus: Putative gustatory receptor 59b (587 aa).

Residues Met-1–Tyr-4 lie on the Cytoplasmic side of the membrane. The chain crosses the membrane as a helical span at residues Met-5–Ile-25. The Extracellular portion of the chain corresponds to Ser-26–Met-62. The chain crosses the membrane as a helical span at residues Phe-63–Val-83. Over Tyr-84 to Gly-97 the chain is Cytoplasmic. The chain crosses the membrane as a helical span at residues Leu-98 to Leu-118. Over Met-119 to Lys-277 the chain is Extracellular. N-linked (GlcNAc...) asparagine glycosylation occurs at Asn-159. Residues Trp-278–Val-298 form a helical membrane-spanning segment. Residues Met-299–Arg-309 lie on the Cytoplasmic side of the membrane. Residues Thr-310–Val-330 form a helical membrane-spanning segment. Residues Arg-331–Arg-403 lie on the Extracellular side of the membrane. Residues Ile-404–Leu-424 form a helical membrane-spanning segment. Residues Phe-425 to Arg-518 lie on the Cytoplasmic side of the membrane. The helical transmembrane segment at Phe-519–Leu-539 threads the bilayer. Over Ser-540 to Tyr-587 the chain is Extracellular.

The protein belongs to the insect chemoreceptor superfamily. Gustatory receptor (GR) family. Gr22e subfamily.

It is found in the cell membrane. In terms of biological role, probable gustatory receptor which mediates acceptance or avoidance behavior, depending on its substrates. The chain is Putative gustatory receptor 59b from Drosophila erecta (Fruit fly).